The sequence spans 343 residues: Arginine-hydroxylase NDUFAF5, mitochondrial (343 aa).

The N-terminal 29 residues, 1–29 (MLRKVVLLRLCPLLGRPAVSASSGSRREV), are a transit peptide targeting the mitochondrion.

It belongs to the methyltransferase superfamily. In terms of assembly, interacts with NDUFAF8, leading to stabilize NDUFAF5. Interacts with NDUFS7. Interacts with PYURF (via TRM112 domain); the interaction is direct and stabilizes NDUFAF5 protein.

The protein resides in the mitochondrion inner membrane. Functionally, arginine hydroxylase that mediates hydroxylation of 'Arg-122' of NDUFS7 and is involved in the assembly of mitochondrial NADH:ubiquinone oxidoreductase complex (complex I, MT-ND1) at early stages. May also have methyltransferase activity. The protein is Arginine-hydroxylase NDUFAF5, mitochondrial of Mus musculus (Mouse).